Here is a 384-residue protein sequence, read N- to C-terminus: Class V chitinase CHIT5a (384 aa).

Residues 1-27 (MAVQKIIITPILVFLVTIFFNVSSSSS) form the signal peptide. N-linked (GlcNAc...) asparagine glycans are attached at residues asparagine 29, asparagine 114, and asparagine 133. The GH18 domain maps to 39–384 (GVRSAYWPAG…SKQASNAWGH (346 aa)). Glutamate 152 serves as the catalytic Proton donor. Residues asparagine 195 and asparagine 234 are each glycosylated (N-linked (GlcNAc...) asparagine).

It belongs to the glycosyl hydrolase 18 family. Chitinase class V subfamily.

The catalysed reaction is Random endo-hydrolysis of N-acetyl-beta-D-glucosaminide (1-&gt;4)-beta-linkages in chitin and chitodextrins.. Its pathway is glycan degradation; chitin degradation. Possesses chitinase activity in vitro toward glycol chitin, carboxymethyl-chitin, colloidal chitin, and the chitin oligosaccharides (N-acetylglucosamine) (GlcNAc)6 and (GlcNAc)5. Hydrolyzes (GlcNAc)6 into (GlcNAc)4 and (GlcNAc)2, or two (GlcNAc)3 molecules. Has the capacity to inhibit hyphal growth of the fungus Trichoderma viride in an agar-plate bioassay. This chain is Class V chitinase CHIT5a, found in Medicago truncatula (Barrel medic).